A 532-amino-acid chain; its full sequence is Membrane protein insertase YidC (532 aa).

Transmembrane regions (helical) follow at residues phenylalanine 7 to methionine 27, leucine 336 to isoleucine 356, glycine 413 to isoleucine 433, leucine 450 to isoleucine 470, and proline 492 to isoleucine 512.

Belongs to the OXA1/ALB3/YidC family. Type 1 subfamily. Interacts with the Sec translocase complex via SecD. Specifically interacts with transmembrane segments of nascent integral membrane proteins during membrane integration.

Its subcellular location is the cell membrane. Its function is as follows. Required for the insertion and/or proper folding and/or complex formation of integral membrane proteins into the membrane. Involved in integration of membrane proteins that insert both dependently and independently of the Sec translocase complex, as well as at least some lipoproteins. Aids folding of multispanning membrane proteins. This is Membrane protein insertase YidC from Buchnera aphidicola subsp. Acyrthosiphon pisum (strain Tuc7).